The sequence spans 276 residues: 5-deoxy-glucuronate isomerase (276 aa).

Belongs to the isomerase IolB family.

It carries out the reaction 5-deoxy-D-glucuronate = 5-dehydro-2-deoxy-D-gluconate. The protein operates within polyol metabolism; myo-inositol degradation into acetyl-CoA; acetyl-CoA from myo-inositol: step 4/7. Functionally, involved in the isomerization of 5-deoxy-glucuronate (5DG) to 5-dehydro-2-deoxy-D-gluconate (DKG or 2-deoxy-5-keto-D-gluconate). The polypeptide is 5-deoxy-glucuronate isomerase (Geobacillus kaustophilus (strain HTA426)).